We begin with the raw amino-acid sequence, 368 residues long: DNA replication and repair protein RecF (368 aa).

30 to 37 (GDNGAGKT) serves as a coordination point for ATP.

The protein belongs to the RecF family.

The protein localises to the cytoplasm. Its function is as follows. The RecF protein is involved in DNA metabolism; it is required for DNA replication and normal SOS inducibility. RecF binds preferentially to single-stranded, linear DNA. It also seems to bind ATP. The sequence is that of DNA replication and repair protein RecF from Xanthomonas axonopodis pv. citri (strain 306).